The chain runs to 343 residues: MTQETITTDVVIVGAGPCGLFAVFELGLLDMKCHLVDILDKPGGQCAELYPEKPIYDIPALPVVSGHELTERLMEQAAPFGPQYHYNEMVEEVQKLEDGRWRVKTDGGLVFEAKVVVIAAGGGSFQPKKPPIPGIEAYEGKSVFYAVKRMETFRGKNVLISGGGDSALDWTINLHPIVQSMQLIHRRDGFRAAPDSVNKMHALVEEKKMQFHLGQITSLHGDNGQLEGVTVKGNDGADYQIECDTLLPFFGLTMKLGPIANWGINLHENLIPVDTEKFQTSEPGLFAIGDINTYPGKLKLILSGFHEAALMAQAAFRYANPDAKLTFQYTTSSTSLQKKLGVA.

FAD contacts are provided by Cys18, Asp37, Gln45, Tyr50, Val90, Phe125, Asp290, and Thr331.

This sequence belongs to the ferredoxin--NADP reductase type 2 family. In terms of assembly, homodimer. FAD is required as a cofactor.

It carries out the reaction 2 reduced [2Fe-2S]-[ferredoxin] + NADP(+) + H(+) = 2 oxidized [2Fe-2S]-[ferredoxin] + NADPH. The polypeptide is Ferredoxin--NADP reductase (Parvibaculum lavamentivorans (strain DS-1 / DSM 13023 / NCIMB 13966)).